A 31-amino-acid polypeptide reads, in one-letter code: Cytochrome b6-f complex subunit 6 (31 aa).

A helical membrane pass occupies residues 3-23 (VAIDYFLLVGFCFAVTSGLWI).

Belongs to the PetL family. As to quaternary structure, the 4 large subunits of the cytochrome b6-f complex are cytochrome b6, subunit IV (17 kDa polypeptide, PetD), cytochrome f and the Rieske protein, while the 4 small subunits are PetG, PetL, PetM and PetN. The complex functions as a dimer.

It is found in the plastid. It localises to the chloroplast thylakoid membrane. Its function is as follows. Component of the cytochrome b6-f complex, which mediates electron transfer between photosystem II (PSII) and photosystem I (PSI), cyclic electron flow around PSI, and state transitions. PetL is important for photoautotrophic growth as well as for electron transfer efficiency and stability of the cytochrome b6-f complex. This Phaeodactylum tricornutum (strain CCAP 1055/1) protein is Cytochrome b6-f complex subunit 6.